The sequence spans 527 residues: Laccase-5 (527 aa).

The first 23 residues, 1–23 (MGKYHSFVNVVALSLSLSGRVFG), serve as a signal peptide directing secretion. The region spanning 25–150 (IGPVTDLTIS…DGLRGPLVVY (126 aa)) is the Plastocyanin-like 1 domain. Residues Asn-74 and Asn-77 are each glycosylated (N-linked (GlcNAc...) asparagine). Cu cation contacts are provided by His-87, His-89, His-132, and His-134. 2 cysteine pairs are disulfide-bonded: Cys-108/Cys-516 and Cys-140/Cys-230. 10 N-linked (GlcNAc...) asparagine glycosylation sites follow: Asn-156, Asn-209, Asn-233, Asn-242, Asn-276, Asn-317, Asn-358, Asn-366, Asn-393, and Asn-402. In terms of domain architecture, Plastocyanin-like 2 spans 162-306 (VDDDTTVITL…GGVNSAILRY (145 aa)). The Plastocyanin-like 3 domain maps to 373 to 498 (TVPVLLQILS…AGFAIVWGED (126 aa)). Positions 425, 428, 430, 480, 481, 482, and 486 each coordinate Cu cation.

The protein belongs to the multicopper oxidase family. In terms of assembly, homodimer. It depends on Cu cation as a cofactor.

It is found in the secreted. The enzyme catalyses 4 hydroquinone + O2 = 4 benzosemiquinone + 2 H2O. Lignin degradation and detoxification of lignin-derived products. In Trametes villosa (White-rot fungus), this protein is Laccase-5 (LCC5).